Consider the following 275-residue polypeptide: Dermonecrotic toxin LamSicTox-alphaIV1iii (275 aa).

The active site involves H5. Residues E25 and D27 each coordinate Mg(2+). The active-site Nucleophile is H41. 2 disulfide bridges follow: C45–C51 and C47–C192. D85 is a binding site for Mg(2+).

It belongs to the arthropod phospholipase D family. Class II subfamily. It depends on Mg(2+) as a cofactor. As to expression, expressed by the venom gland.

Its subcellular location is the secreted. It catalyses the reaction an N-(acyl)-sphingosylphosphocholine = an N-(acyl)-sphingosyl-1,3-cyclic phosphate + choline. It carries out the reaction an N-(acyl)-sphingosylphosphoethanolamine = an N-(acyl)-sphingosyl-1,3-cyclic phosphate + ethanolamine. The enzyme catalyses a 1-acyl-sn-glycero-3-phosphocholine = a 1-acyl-sn-glycero-2,3-cyclic phosphate + choline. The catalysed reaction is a 1-acyl-sn-glycero-3-phosphoethanolamine = a 1-acyl-sn-glycero-2,3-cyclic phosphate + ethanolamine. Its function is as follows. Dermonecrotic toxins cleave the phosphodiester linkage between the phosphate and headgroup of certain phospholipids (sphingolipid and lysolipid substrates), forming an alcohol (often choline) and a cyclic phosphate. This toxin acts on sphingomyelin (SM). It may also act on ceramide phosphoethanolamine (CPE), lysophosphatidylcholine (LPC) and lysophosphatidylethanolamine (LPE), but not on lysophosphatidylserine (LPS), and lysophosphatidylglycerol (LPG). It acts by transphosphatidylation, releasing exclusively cyclic phosphate products as second products. Induces dermonecrosis, hemolysis, increased vascular permeability, edema, inflammatory response, and platelet aggregation. This is Dermonecrotic toxin LamSicTox-alphaIV1iii from Loxosceles amazonica (Recluse spider).